Here is a 245-residue protein sequence, read N- to C-terminus: TLC domain-containing protein 5 (245 aa).

A run of 6 helical transmembrane segments spans residues 1-21, 38-58, 75-95, 99-119, 162-182, and 191-211; these read MAVG…SLYT, LVTF…GFID, VHVL…CIYF, GPLM…ALAL, FLFV…LLFC, and WFVK…MVSI. The 176-residue stretch at 29–204 folds into the TLC domain; sequence HRSCEWSCRL…VGGVAMYAVS (176 aa).

Belongs to the TLCD5 family.

The protein localises to the membrane. This is TLC domain-containing protein 5 (Tlcd5) from Mus musculus (Mouse).